The chain runs to 597 residues: Phosphoinositide phosphatase SAC7 (597 aa).

One can recognise an SAC domain in the interval leucine 130 to glycine 458. The Phosphatase catalytic core motif lies at arginine 393–asparagine 404. 2 consecutive transmembrane segments (helical) span residues alanine 528–methionine 548 and histidine 559–valine 579.

Ubiquitous.

The protein localises to the endoplasmic reticulum membrane. Its subcellular location is the cytoplasmic vesicle membrane. Phosphoinositide phosphatase that preferentially hydrolyzes PtdIns(4)P. Regulates the accumulation of PtdIns(4)P on membrane compartments at the tips of growing root hairs leading to proper root hair development. In Arabidopsis thaliana (Mouse-ear cress), this protein is Phosphoinositide phosphatase SAC7 (SAC7).